Reading from the N-terminus, the 338-residue chain is Aspartate-semialdehyde dehydrogenase (338 aa).

Residues 13 to 16 and 41 to 42 each bind NADP(+); these read TGNV and NS. R101 serves as a coordination point for phosphate. C132 (acyl-thioester intermediate) is an active-site residue. Q159 contacts substrate. NADP(+) contacts are provided by residues 162-163 and P187; that span reads SG. K216 provides a ligand contact to phosphate. R237 provides a ligand contact to substrate. H244 acts as the Proton acceptor in catalysis. N317 contacts NADP(+).

It belongs to the aspartate-semialdehyde dehydrogenase family. Homodimer.

It carries out the reaction L-aspartate 4-semialdehyde + phosphate + NADP(+) = 4-phospho-L-aspartate + NADPH + H(+). The protein operates within amino-acid biosynthesis; L-lysine biosynthesis via DAP pathway; (S)-tetrahydrodipicolinate from L-aspartate: step 2/4. Its pathway is amino-acid biosynthesis; L-methionine biosynthesis via de novo pathway; L-homoserine from L-aspartate: step 2/3. It participates in amino-acid biosynthesis; L-threonine biosynthesis; L-threonine from L-aspartate: step 2/5. Its function is as follows. Catalyzes the NADPH-dependent formation of L-aspartate-semialdehyde (L-ASA) by the reductive dephosphorylation of L-aspartyl-4-phosphate. In Rickettsia typhi (strain ATCC VR-144 / Wilmington), this protein is Aspartate-semialdehyde dehydrogenase.